We begin with the raw amino-acid sequence, 188 residues long: Adenine phosphoribosyltransferase (188 aa).

It belongs to the purine/pyrimidine phosphoribosyltransferase family. In terms of assembly, homodimer.

Its subcellular location is the cytoplasm. The enzyme catalyses AMP + diphosphate = 5-phospho-alpha-D-ribose 1-diphosphate + adenine. The protein operates within purine metabolism; AMP biosynthesis via salvage pathway; AMP from adenine: step 1/1. In terms of biological role, catalyzes a salvage reaction resulting in the formation of AMP, that is energically less costly than de novo synthesis. In Frankia casuarinae (strain DSM 45818 / CECT 9043 / HFP020203 / CcI3), this protein is Adenine phosphoribosyltransferase.